The primary structure comprises 175 residues: Zinc finger A20 and AN1 domain-containing stress-associated protein 7 (175 aa).

The A20-type zinc-finger motif lies at 13–47 (PTEPKLCDNGCGFFGSPSNMNLCSKCYRSLRAEED). Cys19, Cys23, Cys35, Cys38, Cys116, Cys119, Cys130, Cys132, Cys137, His140, His146, and Cys148 together coordinate Zn(2+). The AN1-type zinc-finger motif lies at 110–156 (VRPNNRCFSCNKKVGVMGFKCKCGSTFCGSHRYPEKHECSFDFKEVG).

In terms of biological role, may be involved in environmental stress response. The protein is Zinc finger A20 and AN1 domain-containing stress-associated protein 7 (SAP7) of Arabidopsis thaliana (Mouse-ear cress).